The chain runs to 674 residues: Sterile alpha motif domain-containing protein 15 (674 aa).

The segment covering 1–18 has biased composition (acidic residues); that stretch reads MAEVPEDYDSGPDEDGEL. Residues 1–448 are disordered; the sequence is MAEVPEDYDS…LEHREPKRGK (448 aa). 3 stretches are compositionally biased toward basic and acidic residues: residues 87–142, 195–223, and 236–274; these read IAKE…EEAK, ESLR…KLGE, and TKPE…KSSE. Acidic residues predominate over residues 276-290; it reads AGLEPPEETQPEVPE. Basic and acidic residues-rich tracts occupy residues 291–322, 330–346, 354–372, and 391–429; these read EMQR…KSTD, EEIK…KTNE, EMMK…EKKN, and VEEK…EPIK. Positions 545-608 constitute an SAM domain; the sequence is WDPEEVAEWI…SRHTQELLEI (64 aa).

In Homo sapiens (Human), this protein is Sterile alpha motif domain-containing protein 15 (SAMD15).